The primary structure comprises 467 residues: Neuromedin-K receptor (467 aa).

Topologically, residues 1–86 are extracellular; the sequence is MDSFAAAETW…TNQFVQPSWR (86 aa). N-linked (GlcNAc...) asparagine glycans are attached at residues Asn-23, Asn-50, and Asn-75. The helical transmembrane segment at 87-109 threads the bilayer; it reads IALWSLAYGVVVAVAVFGNLIVI. The Cytoplasmic segment spans residues 110 to 119; it reads WIILAHKRMR. Residues 120–141 form a helical membrane-spanning segment; sequence TVTNYFLVNLAFSDASMAAFNT. Residues 142 to 161 are Extracellular-facing; the sequence is LVNFIYALHSEWYFGANYCR. A disulfide bond links Cys-160 and Cys-235. Residues 162 to 183 form a helical membrane-spanning segment; it reads FQNFFPITAVFASIYSMTAIAV. Residues 184-203 are Cytoplasmic-facing; that stretch reads DRYMAIIDPLKPRLSATATK. Residues 204-224 form a helical membrane-spanning segment; that stretch reads IVIGSIWILAFLLALPQCLYS. At 225-247 the chain is on the extracellular side; it reads KTKVMPGRTLCYVQWPEGPKQHF. Residues 248–272 form a helical membrane-spanning segment; it reads IYHIIVIILVYCFPLLIMGITYTIV. Over 273–301 the chain is Cytoplasmic; sequence GITLWGGEIPGDTCDKYHEQLKAKRKVVK. The chain crosses the membrane as a helical span at residues 302–323; that stretch reads MMIIVVVTFAICWLPYHIYFIL. The Extracellular segment spans residues 324–336; it reads TAIYQQLNRWKYI. Residues 337–361 traverse the membrane as a helical segment; that stretch reads QQVYLASFWLAMSSTMYNPIIYCCL. Residues 362–467 lie on the Cytoplasmic side of the membrane; it reads NKRFRAGFKR…SPYTSMEEYS (106 aa). Residue Cys-376 is the site of S-palmitoyl cysteine attachment. The disordered stretch occupies residues 416 to 467; the sequence is DPSDADNTRSSRKKRATPGDPNFNGCSRRNSKSASTTSSFISSPYTSMEEYS. Low complexity predominate over residues 447–467; sequence KSASTTSSFISSPYTSMEEYS.

Belongs to the G-protein coupled receptor 1 family.

The protein localises to the cell membrane. In terms of biological role, this is a receptor for the tachykinin neuropeptide neuromedin-K (neurokinin B). It is associated with G proteins that activate a phosphatidylinositol-calcium second messenger system. This chain is Neuromedin-K receptor (TACR3), found in Oryctolagus cuniculus (Rabbit).